Reading from the N-terminus, the 218-residue chain is Cytochrome b6 (218 aa).

Residues 35 to 55 traverse the membrane as a helical segment; that stretch reads IFYCLGGITLVCFLIQFATGF. Cysteine 38 contributes to the heme c binding site. Heme b is bound by residues histidine 89 and histidine 103. The next 3 membrane-spanning stretches (helical) occupy residues 93–113, 119–139, and 189–209; these read ASMM…TGGF, LTWV…VTGY, and LHTF…FLMI. Heme b is bound by residues histidine 190 and histidine 205.

It belongs to the cytochrome b family. PetB subfamily. The 4 large subunits of the cytochrome b6-f complex are cytochrome b6, subunit IV (17 kDa polypeptide, PetD), cytochrome f and the Rieske protein, while the 4 small subunits are PetG, PetL, PetM and PetN. The complex functions as a dimer. The cofactor is heme b. Heme c serves as cofactor.

The protein localises to the cellular thylakoid membrane. Functionally, component of the cytochrome b6-f complex, which mediates electron transfer between photosystem II (PSII) and photosystem I (PSI), cyclic electron flow around PSI, and state transitions. In Prochlorococcus marinus (strain MIT 9515), this protein is Cytochrome b6.